The sequence spans 302 residues: NAD kinase 2 (302 aa).

Residue Asp-79 is the Proton acceptor of the active site. Residues 79 to 80 (DG), 153 to 154 (NE), Asp-183, 194 to 199 (TAYSLS), Ala-218, and Asn-252 each bind NAD(+).

Belongs to the NAD kinase family. A divalent metal cation serves as cofactor.

It is found in the cytoplasm. The catalysed reaction is NAD(+) + ATP = ADP + NADP(+) + H(+). Its function is as follows. Involved in the regulation of the intracellular balance of NAD and NADP, and is a key enzyme in the biosynthesis of NADP. Catalyzes specifically the phosphorylation on 2'-hydroxyl of the adenosine moiety of NAD to yield NADP. The sequence is that of NAD kinase 2 from Prochlorococcus marinus subsp. pastoris (strain CCMP1986 / NIES-2087 / MED4).